The primary structure comprises 834 residues: Periplasmic nitrate reductase (834 aa).

A signal peptide (tat-type signal) is located at residues 1–31 (MSSELTRRNLLKAHAAGIAAATAGIALPAAA). A 4Fe-4S Mo/W bis-MGD-type domain is found at 43–99 (IKWSKAPCRFCGTGCGVMVGVKEGKVVATHGDMQAEVNRGLNCIKGYFLSKIMYGKD). Residues cysteine 50, cysteine 53, cysteine 57, and cysteine 85 each coordinate [4Fe-4S] cluster. Residues lysine 87, glutamine 154, asparagine 179, cysteine 183, 216-223 (WGSNMAEM), 247-251 (STFTH), 266-268 (GTD), methionine 377, glutamine 381, asparagine 487, 513-514 (SD), lysine 536, aspartate 563, and 723-732 (TGRVLEHWHS) each bind Mo-bis(molybdopterin guanine dinucleotide). Position 799 (tryptophan 799) interacts with substrate. 2 residues coordinate Mo-bis(molybdopterin guanine dinucleotide): asparagine 807 and lysine 824.

It belongs to the prokaryotic molybdopterin-containing oxidoreductase family. NasA/NapA/NarB subfamily. In terms of assembly, component of the periplasmic nitrate reductase NapAB complex composed of NapA and NapB. Requires [4Fe-4S] cluster as cofactor. The cofactor is Mo-bis(molybdopterin guanine dinucleotide). Predicted to be exported by the Tat system. The position of the signal peptide cleavage has not been experimentally proven.

It is found in the periplasm. The enzyme catalyses 2 Fe(II)-[cytochrome] + nitrate + 2 H(+) = 2 Fe(III)-[cytochrome] + nitrite + H2O. Functionally, catalytic subunit of the periplasmic nitrate reductase complex NapAB. Receives electrons from NapB and catalyzes the reduction of nitrate to nitrite. The chain is Periplasmic nitrate reductase from Agrobacterium fabrum (strain C58 / ATCC 33970) (Agrobacterium tumefaciens (strain C58)).